Here is a 225-residue protein sequence, read N- to C-terminus: Ribose-5-phosphate isomerase A (225 aa).

Substrate contacts are provided by residues 26 to 29 (TGST), 82 to 85 (DGAD), and 95 to 98 (KGGG). The Proton acceptor role is filled by E104. Position 122 (K122) interacts with substrate.

Belongs to the ribose 5-phosphate isomerase family. In terms of assembly, homodimer.

It carries out the reaction aldehydo-D-ribose 5-phosphate = D-ribulose 5-phosphate. The protein operates within carbohydrate degradation; pentose phosphate pathway; D-ribose 5-phosphate from D-ribulose 5-phosphate (non-oxidative stage): step 1/1. In terms of biological role, catalyzes the reversible conversion of ribose-5-phosphate to ribulose 5-phosphate. This Streptococcus mutans serotype c (strain ATCC 700610 / UA159) protein is Ribose-5-phosphate isomerase A.